Reading from the N-terminus, the 75-residue chain is ATP synthase subunit epsilon, mitochondrial (75 aa).

The N-terminal 9 residues, 1 to 9 (MIRRSCALL), are a transit peptide targeting the mitochondrion.

Belongs to the eukaryotic ATPase epsilon family. As to quaternary structure, F-type ATPases have 2 components, F(1) - the catalytic core - and F(o) - the membrane proton channel. F(1) has five subunits: alpha(3), beta(3), gamma(1), delta(1), epsilon(1), plus the additional subunit P18 (Tb427.05.1710) that is not present in F(1)F(o) ATP synthase from metazoa. Subunit P18 (Tb927.5.1710) interacts with the alpha subunit with a 1:1 stoichiometry; the interaction is direct. Subunit gamma is part of the central stalk. F(o) has three main subunits: a, b and c. The trypanosomal ATPase complex contains additional subunits that are not present in the F(1)F(o) ATP synthase from metazoa.

It is found in the mitochondrion. Its subcellular location is the mitochondrion inner membrane. Mitochondrial membrane ATP synthase (F(1)F(o) ATP synthase) produces ATP from ADP in the presence of a proton gradient across the membrane which is generated by electron transport complexes of the respiratory chain. F-type ATPases consist of two structural domains, F(1) - containing the extramembraneous catalytic core, and F(o) - containing the membrane proton channel, linked together by a central stalk and a peripheral stalk. During catalysis, ATP synthesis in the catalytic domain of F(1) is coupled via a rotary mechanism of the central stalk subunits to proton translocation. Subunits alpha and beta form the catalytic core in F(1). Rotation of the central stalk against the surrounding alpha(3)beta(3) subunits leads to hydrolysis of ATP in three separate catalytic sites on the beta subunits. Contrary to the procyclic, insect form that requires F(1)F(o) ATP synthase for ATP synthesis, the bloodstream form relies on ATP hydrolysis by F(1)F(o) ATP synthase to maintain its mitochondrial membrane potential. This is ATP synthase subunit epsilon, mitochondrial from Trypanosoma brucei brucei.